The sequence spans 217 residues: Proteasome subunit beta type-9 (217 aa).

Residues 1–18 constitute a propeptide, removed in mature form; it reads MLGEEAEPQWISEEVKTG. Catalysis depends on threonine 19, which acts as the Nucleophile.

This sequence belongs to the peptidase T1B family. As to quaternary structure, the 26S proteasome consists of a 20S proteasome core and two 19S regulatory subunits. The 20S proteasome core is composed of 28 subunits that are arranged in four stacked rings, resulting in a barrel-shaped structure. The two end rings are each formed by seven alpha subunits, and the two central rings are each formed by seven beta subunits. The catalytic chamber with the active sites is on the inside of the barrel. Component of the immunoproteasome, where it displaces the equivalent housekeeping subunit PSMB6. In terms of processing, autocleaved. The resulting N-terminal Thr residue of the mature subunit is responsible for the nucleophile proteolytic activity.

The protein localises to the cytoplasm. It localises to the nucleus. It catalyses the reaction Cleavage of peptide bonds with very broad specificity.. The proteasome is a multicatalytic proteinase complex which is characterized by its ability to cleave peptides with Arg, Phe, Tyr, Leu, and Glu adjacent to the leaving group at neutral or slightly basic pH. The proteasome has an ATP-dependent proteolytic activity. This subunit is involved in antigen processing to generate class I binding peptides. This Oryzias latipes (Japanese rice fish) protein is Proteasome subunit beta type-9 (psmb9).